A 676-amino-acid polypeptide reads, in one-letter code: Electrogenic aspartate/glutamate antiporter SLC25A12, mitochondrial (676 aa).

Position 2 is an N-acetylalanine (A2). The segment at 2-293 is regulatory N-terminal domain; it reads AVKVHTTKRG…TLADIERIAP (292 aa). Topologically, residues 2 to 328 are mitochondrial intermembrane; the sequence is AVKVHTTKRG…WLQIAESAYR (327 aa). Positions 65, 67, 69, 71, and 76 each coordinate Ca(2+). 4 EF-hand domains span residues 65–76, 86–121, 125–155, and 157–192; these read DQTKDGLISYQE, APDS…TIIH, PFNW…QFLQ, and LQLE…IRSH. The linker loop domain stretch occupies residues 294-309; sequence LAEGALPYNLAELQRQ. The carrier domain stretch occupies residues 319 to 611; sequence WLQIAESAYR…RWFYIDFGGL (293 aa). 3 Solcar repeats span residues 323 to 415, 423 to 507, and 515 to 603; these read AESA…VRDK, IPLP…CKLL, and VGGI…LQRW. A helical transmembrane segment spans residues 329 to 346; sequence FTLGSVAGAVGATAVYPI. At 347–389 the chain is on the mitochondrial matrix side; it reads DLVKTRMQNQRGTGSVVGELMYKNSFDCFKKVLRYEGFFGLYR. The chain crosses the membrane as a helical span at residues 390–409; the sequence is GLIPQLIGVAPEKAIKLTVN. The Mitochondrial intermembrane segment spans residues 410-432; sequence DFVRDKFTRRDGSIPLPAEILAG. A helical membrane pass occupies residues 433 to 446; it reads GCAGGSQVIFTNPL. Residues 447 to 481 lie on the Mitochondrial matrix side of the membrane; that stretch reads EIVKIRLQVAGEITTGPRVSALNVLQDLGLFGLYK. The helical transmembrane segment at 482-501 threads the bilayer; the sequence is GAKACFLRDIPFSAIYFPVY. Residues 502 to 520 lie on the Mitochondrial intermembrane side of the membrane; it reads AHCKLLLADENGHVGGINL. Residues 521–538 form a helical membrane-spanning segment; the sequence is LTAGAMAGVPAASLVTPA. Residues 539–577 are Mitochondrial matrix-facing; sequence DVIKTRLQVAARAGQTTYSGVIDCFRKILREEGPSAFWK. Residues 578–597 traverse the membrane as a helical segment; that stretch reads GTAARVFRSSPQFGVTLVTY. At 598–676 the chain is on the mitochondrial intermembrane side; the sequence is ELLQRWFYID…AQPKVAAAAQ (79 aa). A C-terminal domain region spans residues 612 to 674; that stretch reads KPSGSEPTPK…AAAQPKVAAA (63 aa).

The protein belongs to the mitochondrial carrier (TC 2.A.29) family. In terms of assembly, homodimer (via N-terminus).

The protein localises to the mitochondrion inner membrane. It carries out the reaction L-aspartate(in) + L-glutamate(out) + H(+)(out) = L-aspartate(out) + L-glutamate(in) + H(+)(in). The catalysed reaction is 3-sulfino-L-alanine(out) + L-glutamate(in) + H(+)(in) = 3-sulfino-L-alanine(in) + L-glutamate(out) + H(+)(out). The enzyme catalyses 3-sulfino-L-alanine(out) + L-aspartate(in) = 3-sulfino-L-alanine(in) + L-aspartate(out). L-aspartate and 3-sulfino-L-alanine uptake are both inhibited by glisoxepide. In terms of biological role, mitochondrial electrogenic aspartate/glutamate antiporter that favors efflux of aspartate and entry of glutamate and proton within the mitochondria as part of the malate-aspartate shuttle. Also mediates the uptake of L-cysteinesulfinate (3-sulfino-L-alanine) by mitochondria in exchange of L-glutamate and proton. Can also exchange L-cysteinesulfinate with aspartate in their anionic form without any proton translocation. Lacks transport activity towards L-glutamine or gamma-aminobutyric acid (GABA). The polypeptide is Electrogenic aspartate/glutamate antiporter SLC25A12, mitochondrial (Rattus norvegicus (Rat)).